The sequence spans 325 residues: Foldase protein PrsA (325 aa).

An N-terminal signal peptide occupies residues 1-20 (MKLMNKIIVPVTASALLLGA). The N-palmitoyl cysteine moiety is linked to residue Cys21. Cys21 is lipidated: S-diacylglycerol cysteine. The 107-residue stretch at 139-245 (ENSKKASHIL…YGYHIIKADK (107 aa)) folds into the PpiC domain. Disordered stretches follow at residues 159–202 (EGLS…KKDG) and 303–325 (PDKI…NSGS).

It belongs to the PrsA family.

It localises to the cell membrane. It catalyses the reaction [protein]-peptidylproline (omega=180) = [protein]-peptidylproline (omega=0). Plays a major role in protein secretion by helping the post-translocational extracellular folding of several secreted proteins. The polypeptide is Foldase protein PrsA (Staphylococcus epidermidis (strain ATCC 12228 / FDA PCI 1200)).